The primary structure comprises 266 residues: Uxu operon regulator (266 aa).

The HTH gntR-type domain maps to 23 to 91; it reads NRTYTRIGQL…KGSGVYVVRT (69 aa). The segment at residues 51-70 is a DNA-binding region (H-T-H motif); the sequence is EREISEKFGVSRTIVREAMV.

In terms of biological role, repressor for the uxuRBA operon. In Haemophilus influenzae (strain ATCC 51907 / DSM 11121 / KW20 / Rd), this protein is Uxu operon regulator (uxuR).